A 144-amino-acid polypeptide reads, in one-letter code: 3-hydroxyacyl-[acyl-carrier-protein] dehydratase FabZ (144 aa).

The active site involves His-51.

Belongs to the thioester dehydratase family. FabZ subfamily.

The protein resides in the cytoplasm. The catalysed reaction is a (3R)-hydroxyacyl-[ACP] = a (2E)-enoyl-[ACP] + H2O. Its function is as follows. Involved in unsaturated fatty acids biosynthesis. Catalyzes the dehydration of short chain beta-hydroxyacyl-ACPs and long chain saturated and unsaturated beta-hydroxyacyl-ACPs. The chain is 3-hydroxyacyl-[acyl-carrier-protein] dehydratase FabZ from Clostridium botulinum (strain Loch Maree / Type A3).